The chain runs to 319 residues: Malate dehydrogenase (319 aa).

NAD(+)-binding positions include 11-16 (GAGNVG) and Asp36. Residues Arg85 and Arg91 each contribute to the substrate site. NAD(+)-binding positions include Asn98 and 121–123 (VSN). Substrate contacts are provided by Asn123 and Arg154. The Proton acceptor role is filled by His178.

The protein belongs to the LDH/MDH superfamily. MDH type 3 family.

The catalysed reaction is (S)-malate + NAD(+) = oxaloacetate + NADH + H(+). Its function is as follows. Catalyzes the reversible oxidation of malate to oxaloacetate. This chain is Malate dehydrogenase, found in Sulfurimonas denitrificans (strain ATCC 33889 / DSM 1251) (Thiomicrospira denitrificans (strain ATCC 33889 / DSM 1251)).